A 447-amino-acid chain; its full sequence is N-succinylarginine dihydrolase (447 aa).

Residues 19-28, Asn110, and 137-138 contribute to the substrate site; these read AGLSFGNEAS and HR. Glu174 is an active-site residue. Arg214 contributes to the substrate binding site. His250 is a catalytic residue. Residues Asp252 and Asn365 each coordinate substrate. The Nucleophile role is filled by Cys371.

It belongs to the succinylarginine dihydrolase family. Homodimer.

The enzyme catalyses N(2)-succinyl-L-arginine + 2 H2O + 2 H(+) = N(2)-succinyl-L-ornithine + 2 NH4(+) + CO2. Its pathway is amino-acid degradation; L-arginine degradation via AST pathway; L-glutamate and succinate from L-arginine: step 2/5. Catalyzes the hydrolysis of N(2)-succinylarginine into N(2)-succinylornithine, ammonia and CO(2). In Acinetobacter baumannii (strain ATCC 17978 / DSM 105126 / CIP 53.77 / LMG 1025 / NCDC KC755 / 5377), this protein is N-succinylarginine dihydrolase.